Here is a 280-residue protein sequence, read N- to C-terminus: Ribosomal protein L11 methyltransferase (280 aa).

4 residues coordinate S-adenosyl-L-methionine: Thr-131, Gly-152, Asp-174, and Asn-217.

Belongs to the methyltransferase superfamily. PrmA family.

The protein resides in the cytoplasm. The enzyme catalyses L-lysyl-[protein] + 3 S-adenosyl-L-methionine = N(6),N(6),N(6)-trimethyl-L-lysyl-[protein] + 3 S-adenosyl-L-homocysteine + 3 H(+). Functionally, methylates ribosomal protein L11. This chain is Ribosomal protein L11 methyltransferase, found in Bacteroides fragilis (strain ATCC 25285 / DSM 2151 / CCUG 4856 / JCM 11019 / LMG 10263 / NCTC 9343 / Onslow / VPI 2553 / EN-2).